A 167-amino-acid chain; its full sequence is NADH-quinone oxidoreductase subunit E (167 aa).

Cysteine 91, cysteine 96, cysteine 132, and cysteine 136 together coordinate [2Fe-2S] cluster.

This sequence belongs to the complex I 24 kDa subunit family. [2Fe-2S] cluster is required as a cofactor.

It carries out the reaction a quinone + NADH + 5 H(+)(in) = a quinol + NAD(+) + 4 H(+)(out). NDH-1 shuttles electrons from NADH, via FMN and iron-sulfur (Fe-S) centers, to quinones in the respiratory chain. Couples the redox reaction to proton translocation (for every two electrons transferred, four hydrogen ions are translocated across the cytoplasmic membrane), and thus conserves the redox energy in a proton gradient. The polypeptide is NADH-quinone oxidoreductase subunit E (nuoE) (Rickettsia bellii (strain RML369-C)).